Here is a 660-residue protein sequence, read N- to C-terminus: Acetyl-coenzyme A synthetase (660 aa).

Residues 197–200 (RGGK) and Thr317 each bind CoA. Residues 397–399 (GEP), 421–426 (DTWWQT), Asp512, and Arg528 each bind ATP. Residue Ser536 coordinates CoA. Arg539 provides a ligand contact to ATP. Mg(2+) is bound by residues Val550, His552, and Val555. Lys625 is modified (N6-acetyllysine).

Belongs to the ATP-dependent AMP-binding enzyme family. Mg(2+) serves as cofactor. Post-translationally, acetylated. Deacetylation by the SIR2-homolog deacetylase activates the enzyme.

It catalyses the reaction acetate + ATP + CoA = acetyl-CoA + AMP + diphosphate. Catalyzes the conversion of acetate into acetyl-CoA (AcCoA), an essential intermediate at the junction of anabolic and catabolic pathways. AcsA undergoes a two-step reaction. In the first half reaction, AcsA combines acetate with ATP to form acetyl-adenylate (AcAMP) intermediate. In the second half reaction, it can then transfer the acetyl group from AcAMP to the sulfhydryl group of CoA, forming the product AcCoA. The protein is Acetyl-coenzyme A synthetase of Burkholderia lata (strain ATCC 17760 / DSM 23089 / LMG 22485 / NCIMB 9086 / R18194 / 383).